The sequence spans 83 residues: Large ribosomal subunit protein eL31 (83 aa).

Belongs to the eukaryotic ribosomal protein eL31 family.

In Methanococcus maripaludis (strain DSM 14266 / JCM 13030 / NBRC 101832 / S2 / LL), this protein is Large ribosomal subunit protein eL31.